The primary structure comprises 213 residues: Cytokinin riboside 5'-monophosphate phosphoribohydrolase LOG1 (213 aa).

Residues Glu78, Arg96–Lys97, Gly113–Glu119, and Thr125 contribute to the substrate site.

This sequence belongs to the LOG family. In terms of tissue distribution, expressed in roots and shoots. Detected in the vascular tissues of roots, cotyledons, leaves and pistils, in the shoot apical meristem and in immature flowers.

It is found in the cytoplasm. It localises to the nucleus. It catalyses the reaction N(6)-(dimethylallyl)adenosine 5'-phosphate + H2O = N(6)-dimethylallyladenine + D-ribose 5-phosphate. The catalysed reaction is 9-ribosyl-trans-zeatin 5'-phosphate + H2O = trans-zeatin + D-ribose 5-phosphate. Cytokinin-activating enzyme working in the direct activation pathway. Phosphoribohydrolase that converts inactive cytokinin nucleotides to the biologically active free-base forms. The protein is Cytokinin riboside 5'-monophosphate phosphoribohydrolase LOG1 (LOG1) of Arabidopsis thaliana (Mouse-ear cress).